Here is a 1313-residue protein sequence, read N- to C-terminus: Angiotensin-converting enzyme (1313 aa).

Positions 1 to 35 are cleaved as a signal peptide; that stretch reads MGAASGQRGRWPLSPPLLMLSLLLLLLLPPSPAPA. The Extracellular portion of the chain corresponds to 36–1265; the sequence is LDPGLQPGNF…LEPQQARVGQ (1230 aa). N-linked (GlcNAc...) asparagine glycans are attached at residues Asn44, Asn60, Asn80, Asn117, Asn152, and Asn166. Peptidase M2 domains follow at residues 46-630 and 649-1228; these read SADE…LGWP and ETDE…LGWP. The cysteines at positions 163 and 171 are disulfide-linked. Tyr237 is a chloride binding site. The N-linked (GlcNAc...) asparagine glycan is linked to Asn324. Cys365 and Cys383 are oxidised to a cystine. His396 contributes to the Zn(2+) binding site. Glu397 (proton acceptor 1) is an active-site residue. Zn(2+) is bound by residues His400 and Glu424. N-linked (GlcNAc...) asparagine glycosylation occurs at Asn515. The active-site Proton donor 1 is His526. Arg535 lines the chloride pocket. An intrachain disulfide couples Cys551 to Cys563. Asn683, Asn701, Asn720, and Asn766 each carry an N-linked (GlcNAc...) asparagine glycan. A disulfide bond links Cys763 and Cys769. Residues Arg797 and Tyr835 each coordinate chloride. An N-linked (GlcNAc...) asparagine glycan is attached at Asn948. A disulfide bridge connects residues Cys963 and Cys981. Residue His994 participates in Zn(2+) binding. The active-site Proton acceptor 2 is Glu995. The Zn(2+) site is built by His998 and Glu1022. The chloride site is built by Trp1096 and Arg1100. Residue His1124 is the Proton donor 2 of the active site. Arg1133 is a binding site for chloride. An intrachain disulfide couples Cys1149 to Cys1161. A glycan (N-linked (GlcNAc...) asparagine) is linked at Asn1197. The juxtamembrane stalk stretch occupies residues 1221 to 1262; it reads HGETLGWPEYTWTPNTARAEGSLPESSRVNFLGMYLEPQQAR. Residues 1266–1282 traverse the membrane as a helical segment; the sequence is WVLLFLGVALLVATVGL. The Cytoplasmic segment spans residues 1283 to 1313; sequence AHRLYNIHNHHSLRRPHRGPQFGSEVELRHS. A Phosphoserine modification is found at Ser1306.

Belongs to the peptidase M2 family. As to quaternary structure, monomer and homodimer; homodimerizes following binding to an inhibitor. Interacts with calmodulin (CALM1, CALM2 or CALM3); interaction takes place in the cytoplasmic region and regulates phosphorylation and proteolytic cleavage. Requires Zn(2+) as cofactor. Chloride serves as cofactor. Post-translationally, produced following proteolytic cleavage by secretase enzymes that cleave the transmembrane form in the juxtamembrane stalk region upstream of the transmembrane region. Cleavage can take place at different sites of the juxtamembrane stalk region. Phosphorylated by CK2 on Ser-1306; which allows membrane retention. Phosphorylated on tyrosine residues on its extracellular part, promoting cleavage by secretase enzymes and formation of the soluble form (Angiotensin-converting enzyme, soluble form). Expressed in brain, kidney, lung, skeletal muscle and heart. As to expression, testis-specific isoform is expressed in spermatocytes, adult testis.

It localises to the cell membrane. The protein localises to the cytoplasm. It is found in the secreted. It catalyses the reaction Release of a C-terminal dipeptide, oligopeptide-|-Xaa-Yaa, when Xaa is not Pro, and Yaa is neither Asp nor Glu. Thus, conversion of angiotensin I to angiotensin II, with increase in vasoconstrictor activity, but no action on angiotensin II.. The enzyme catalyses angiotensin I + H2O = L-histidyl-L-leucine + angiotensin II. The catalysed reaction is bradykinin + H2O = L-Phe-L-Arg + bradykinin(1-7). It carries out the reaction substance P + H2O = substance P(1-9) + L-Leu-L-Met-NH2. It catalyses the reaction substance P + H2O = substance P(1-8) + Gly-L-Leu-L-Met-NH2. The enzyme catalyses substance P + H2O = L-Phe-L-Phe-Gly-L-Leu-L-Met-NH2 + substance P(1-6). The catalysed reaction is neurotensin + H2O = neurotensin(1-11) + L-isoleucyl-L-leucine. It carries out the reaction goralatide + H2O = N-acetyl-L-seryl-L-aspartate + L-lysyl-L-proline. It catalyses the reaction Met-enkephalin + H2O = L-phenylalanyl-L-methionine + L-tyrosylglycylglycine. The enzyme catalyses Leu-enkephalin + H2O = L-tyrosylglycylglycine + L-phenylalanyl-L-leucine. The catalysed reaction is Met-enkephalin-Arg-Phe + H2O = L-arginyl-L-phenylalanine + Met-enkephalin. Its activity is regulated as follows. The dipeptidyl carboxypeptidase activity is strongly activated by chloride. The dipeptidyl carboxypeptidase activity is specifically inhibited by lisinopril, captopril and enalaprilat. Strongly inhibited by lisinopril and captopril. In terms of biological role, dipeptidyl carboxypeptidase that removes dipeptides from the C-terminus of a variety of circulating hormones, such as angiotensin I, bradykinin or enkephalins, thereby playing a key role in the regulation of blood pressure, electrolyte homeostasis or synaptic plasticity. Composed of two similar catalytic domains, each possessing a functional active site, with different selectivity for substrates. Plays a major role in the angiotensin-renin system that regulates blood pressure and sodium retention by the kidney by converting angiotensin I to angiotensin II, resulting in an increase of the vasoconstrictor activity of angiotensin. Also able to inactivate bradykinin, a potent vasodilator, and therefore enhance the blood pressure response. Acts as a regulator of synaptic transmission by mediating cleavage of neuropeptide hormones, such as substance P, neurotensin or enkephalins. Catalyzes degradation of different enkephalin neuropeptides (Met-enkephalin, Leu-enkephalin, Met-enkephalin-Arg-Phe and possibly Met-enkephalin-Arg-Gly-Leu). Acts as a regulator of synaptic plasticity in the nucleus accumbens of the brain by mediating cleavage of Met-enkephalin-Arg-Phe, a strong ligand of Mu-type opioid receptor OPRM1, into Met-enkephalin. Met-enkephalin-Arg-Phe cleavage by ACE decreases activation of OPRM1, leading to long-term synaptic potentiation of glutamate release. Also acts as a regulator of hematopoietic stem cell differentiation by mediating degradation of hemoregulatory peptide N-acetyl-SDKP (AcSDKP). Acts as a regulator of cannabinoid signaling pathway by mediating degradation of hemopressin, an antagonist peptide of the cannabinoid receptor CNR1. Involved in amyloid-beta metabolism by catalyzing degradation of Amyloid-beta protein 40 and Amyloid-beta protein 42 peptides, thereby preventing plaque formation. Catalyzes cleavage of cholecystokinin (maturation of Cholecystokinin-8 and Cholecystokinin-5) and Gonadoliberin-1 (both maturation and degradation) hormones. Degradation of hemoregulatory peptide N-acetyl-SDKP (AcSDKP) and amyloid-beta proteins is mediated by the N-terminal catalytic domain, while angiotensin I and cholecystokinin cleavage is mediated by the C-terminal catalytic region. Functionally, soluble form that is released in blood plasma and other body fluids following proteolytic cleavage in the juxtamembrane stalk region. Isoform produced by alternative promoter usage that is specifically expressed in spermatocytes and adult testis, and which is required for male fertility. In contrast to somatic isoforms, only contains one catalytic domain. Acts as a dipeptidyl carboxypeptidase that removes dipeptides from the C-terminus of substrates. The identity of substrates that are needed for male fertility is unknown. May also have a glycosidase activity which releases GPI-anchored proteins from the membrane by cleaving the mannose linkage in the GPI moiety. The GPIase activity was reported to be essential for the egg-binding ability of the sperm. This activity is however unclear and has been challenged by other groups, suggesting that it may be indirect. The chain is Angiotensin-converting enzyme from Rattus norvegicus (Rat).